Consider the following 369-residue polypeptide: Anhydro-N-acetylmuramic acid kinase (369 aa).

12–19 (GTSMDGVD) contacts ATP.

The protein belongs to the anhydro-N-acetylmuramic acid kinase family.

The enzyme catalyses 1,6-anhydro-N-acetyl-beta-muramate + ATP + H2O = N-acetyl-D-muramate 6-phosphate + ADP + H(+). Its pathway is amino-sugar metabolism; 1,6-anhydro-N-acetylmuramate degradation. It participates in cell wall biogenesis; peptidoglycan recycling. In terms of biological role, catalyzes the specific phosphorylation of 1,6-anhydro-N-acetylmuramic acid (anhMurNAc) with the simultaneous cleavage of the 1,6-anhydro ring, generating MurNAc-6-P. Is required for the utilization of anhMurNAc either imported from the medium or derived from its own cell wall murein, and thus plays a role in cell wall recycling. In Shewanella halifaxensis (strain HAW-EB4), this protein is Anhydro-N-acetylmuramic acid kinase.